The chain runs to 110 residues: Late cornified envelope-like proline-rich protein 1 (110 aa).

Residues 1–24 (MSSDDKNKPGEPKNEPKQCDPGCE) are disordered.

The protein belongs to the cornifin (SPRR) family.

The protein is Late cornified envelope-like proline-rich protein 1 (LELP1) of Bos taurus (Bovine).